Consider the following 309-residue polypeptide: uncharacterized protein (309 aa).

Positions 1–32 form a signal peptide, tat-type signal; sequence MTGTAPVSRRQYLGTAGAIIGTTAGCLTGADA.

This sequence belongs to the bacterial solute-binding protein 1 family. WtpA subfamily. Predicted to be exported by the Tat system. The position of the signal peptide cleavage has not been experimentally proven.

This is an uncharacterized protein from Halobacterium salinarum (strain ATCC 700922 / JCM 11081 / NRC-1) (Halobacterium halobium).